Consider the following 129-residue polypeptide: Phosphoribosyl-AMP cyclohydrolase (129 aa).

Residue Asp-76 participates in Mg(2+) binding. Cys-77 is a binding site for Zn(2+). Residues Asp-78 and Asp-80 each coordinate Mg(2+). 2 residues coordinate Zn(2+): Cys-97 and Cys-104.

Belongs to the PRA-CH family. In terms of assembly, homodimer. The cofactor is Mg(2+). Zn(2+) serves as cofactor.

The protein localises to the cytoplasm. It catalyses the reaction 1-(5-phospho-beta-D-ribosyl)-5'-AMP + H2O = 1-(5-phospho-beta-D-ribosyl)-5-[(5-phospho-beta-D-ribosylamino)methylideneamino]imidazole-4-carboxamide. Its pathway is amino-acid biosynthesis; L-histidine biosynthesis; L-histidine from 5-phospho-alpha-D-ribose 1-diphosphate: step 3/9. Its function is as follows. Catalyzes the hydrolysis of the adenine ring of phosphoribosyl-AMP. The sequence is that of Phosphoribosyl-AMP cyclohydrolase from Albidiferax ferrireducens (strain ATCC BAA-621 / DSM 15236 / T118) (Rhodoferax ferrireducens).